A 309-amino-acid polypeptide reads, in one-letter code: 4-hydroxy-3-methylbut-2-enyl diphosphate reductase (309 aa).

Cys13 contacts [4Fe-4S] cluster. (2E)-4-hydroxy-3-methylbut-2-enyl diphosphate-binding residues include His42 and His75. Dimethylallyl diphosphate contacts are provided by His42 and His75. Isopentenyl diphosphate is bound by residues His42 and His75. Residue Cys97 participates in [4Fe-4S] cluster binding. Residue His125 coordinates (2E)-4-hydroxy-3-methylbut-2-enyl diphosphate. His125 contributes to the dimethylallyl diphosphate binding site. An isopentenyl diphosphate-binding site is contributed by His125. The active-site Proton donor is Glu127. Residue Thr165 participates in (2E)-4-hydroxy-3-methylbut-2-enyl diphosphate binding. A [4Fe-4S] cluster-binding site is contributed by Cys195. Residues Ser223, Ser224, Asn225, and Ser267 each coordinate (2E)-4-hydroxy-3-methylbut-2-enyl diphosphate. Dimethylallyl diphosphate is bound by residues Ser223, Ser224, Asn225, and Ser267. Residues Ser223, Ser224, Asn225, and Ser267 each contribute to the isopentenyl diphosphate site.

It belongs to the IspH family. [4Fe-4S] cluster is required as a cofactor.

It catalyses the reaction isopentenyl diphosphate + 2 oxidized [2Fe-2S]-[ferredoxin] + H2O = (2E)-4-hydroxy-3-methylbut-2-enyl diphosphate + 2 reduced [2Fe-2S]-[ferredoxin] + 2 H(+). It carries out the reaction dimethylallyl diphosphate + 2 oxidized [2Fe-2S]-[ferredoxin] + H2O = (2E)-4-hydroxy-3-methylbut-2-enyl diphosphate + 2 reduced [2Fe-2S]-[ferredoxin] + 2 H(+). Its pathway is isoprenoid biosynthesis; dimethylallyl diphosphate biosynthesis; dimethylallyl diphosphate from (2E)-4-hydroxy-3-methylbutenyl diphosphate: step 1/1. It functions in the pathway isoprenoid biosynthesis; isopentenyl diphosphate biosynthesis via DXP pathway; isopentenyl diphosphate from 1-deoxy-D-xylulose 5-phosphate: step 6/6. Functionally, catalyzes the conversion of 1-hydroxy-2-methyl-2-(E)-butenyl 4-diphosphate (HMBPP) into a mixture of isopentenyl diphosphate (IPP) and dimethylallyl diphosphate (DMAPP). Acts in the terminal step of the DOXP/MEP pathway for isoprenoid precursor biosynthesis. This chain is 4-hydroxy-3-methylbut-2-enyl diphosphate reductase, found in Chlamydia caviae (strain ATCC VR-813 / DSM 19441 / 03DC25 / GPIC) (Chlamydophila caviae).